The following is a 212-amino-acid chain: Large ribosomal subunit protein uL3 (212 aa).

The segment at 136–155 is disordered; that stretch reads THGNSLSHRSNGSIGQNQTP. Residue glutamine 153 is modified to N5-methylglutamine.

This sequence belongs to the universal ribosomal protein uL3 family. In terms of assembly, part of the 50S ribosomal subunit. Forms a cluster with proteins L14 and L19. In terms of processing, methylated by PrmB.

One of the primary rRNA binding proteins, it binds directly near the 3'-end of the 23S rRNA, where it nucleates assembly of the 50S subunit. This chain is Large ribosomal subunit protein uL3, found in Shewanella oneidensis (strain ATCC 700550 / JCM 31522 / CIP 106686 / LMG 19005 / NCIMB 14063 / MR-1).